The primary structure comprises 483 residues: FAD-linked oxidoreductase easE (483 aa).

Residues 10–193 (QGRLPLYSAV…TEATVRVFSD (184 aa)) enclose the FAD-binding PCMH-type domain.

It belongs to the oxygen-dependent FAD-linked oxidoreductase family. FAD is required as a cofactor.

It functions in the pathway alkaloid biosynthesis; ergot alkaloid biosynthesis. In terms of biological role, FAD-linked oxidoreductase; part of the gene cluster that mediates the biosynthesis of fungal ergot alkaloid. DmaW catalyzes the first step of ergot alkaloid biosynthesis by condensing dimethylallyl diphosphate (DMAP) and tryptophan to form 4-dimethylallyl-L-tryptophan. The second step is catalyzed by the methyltransferase easF that methylates 4-dimethylallyl-L-tryptophan in the presence of S-adenosyl-L-methionine, resulting in the formation of 4-dimethylallyl-L-abrine. The catalase easC and the FAD-dependent oxidoreductase easE then transform 4-dimethylallyl-L-abrine to chanoclavine-I which is further oxidized by easD in the presence of NAD(+), resulting in the formation of chanoclavine-I aldehyde. Agroclavine dehydrogenase easG then mediates the conversion of chanoclavine-I aldehyde to agroclavine via a non-enzymatic adduct reaction: the substrate is an iminium intermediate that is formed spontaneously from chanoclavine-I aldehyde in the presence of glutathione. The presence of easA is not required to complete this reaction. Further conversion of agroclavine to paspalic acid is a two-step process involving oxidation of agroclavine to elymoclavine and of elymoclavine to paspalic acid, the second step being performed by the elymoclavine oxidase cloA. Paspalic acid is then further converted to D-lysergic acid. Ergopeptines are assembled from D-lysergic acid and three different amino acids by the D-lysergyl-peptide-synthetases composed each of a monomudular and a trimodular nonribosomal peptide synthetase subunit. LpsB and lpsC encode the monomodular subunits responsible for D-lysergic acid activation and incorporation into the ergopeptine backbone. LpsA1 and A2 subunits encode the trimodular nonribosomal peptide synthetase assembling the tripeptide portion of ergopeptines. LpsA1 is responsible for formation of the major ergopeptine, ergotamine, and lpsA2 for alpha-ergocryptine, the minor ergopeptine of the total alkaloid mixture elaborated by C.purpurea. D-lysergyl-tripeptides are assembled by the nonribosomal peptide synthetases and released as N-(D-lysergyl-aminoacyl)-lactams. Cyclolization of the D-lysergyl-tripeptides is performed by the Fe(2+)/2-ketoglutarate-dependent dioxygenase easH which introduces a hydroxyl group into N-(D-lysergyl-aminoacyl)-lactam at alpha-C of the aminoacyl residue followed by spontaneous condensation with the terminal lactam carbonyl group. The protein is FAD-linked oxidoreductase easE of Claviceps purpurea (Ergot fungus).